A 343-amino-acid polypeptide reads, in one-letter code: Sodium/bile acid cotransporter 7-A (343 aa).

Residues 1–10 (MGLLERLRKE) lie on the Cytoplasmic side of the membrane. A helical membrane pass occupies residues 11–31 (WFIVGIILVIAAAKLEPTVGV). At 32–37 (KGGPLK) the chain is on the extracellular side. A helical transmembrane segment spans residues 38 to 58 (PEITITYIAVSAIFFNSGLSL). Residues 59-71 (KTEELTNALMHVK) lie on the Cytoplasmic side of the membrane. A helical transmembrane segment spans residues 72-92 (LHLFVQLFTLVFFPTAIWLFL). The Extracellular segment spans residues 93 to 116 (QVLSLTPINEWLLKGLQTVSCMPP). A helical membrane pass occupies residues 117 to 137 (PVSSAVILTKAVGGNEAAAIF). Position 138 (N138) is a topological domain, cytoplasmic. A helical transmembrane segment spans residues 139-159 (SAFGSFLGIVVTPLLLLLFLG). The Extracellular portion of the chain corresponds to 160–163 (SSSS). Residues 164 to 184 (VPFTSIFSQLFMTVVVPLIIG) traverse the membrane as a helical segment. Residues 185–201 (QIVRRYIKDWLERKKPP) are Cytoplasmic-facing. A helical transmembrane segment spans residues 202–222 (FGAISSCVLLMIIYTTFCDTF). Over 223 to 234 (SNPNIDLDTFSL) the chain is Extracellular. The chain crosses the membrane as a helical span at residues 235–255 (VVIVFIIFFIQLAFMLLTFLF). The Cytoplasmic portion of the chain corresponds to 256-270 (STSKNSGFTPADTVA). A helical membrane pass occupies residues 271–291 (IVFCSTHKSLTLGIPMLKIVF). The Extracellular portion of the chain corresponds to 292–298 (VGYEHLS). A helical membrane pass occupies residues 299–319 (LISVPLLIYHPAQILLGSVLV). The Cytoplasmic segment spans residues 320 to 343 (PTIKSWMLSRQKALKLTRQPKIPL).

This sequence belongs to the bile acid:sodium symporter (BASS) (TC 2.A.28) family. As to expression, strongly expressed in small intestine. Moderately expressed in spleen. Weakly expressed in skeletal muscle. Not detected in other tissues tested.

It localises to the cell membrane. It is found in the endoplasmic reticulum membrane. The protein resides in the golgi apparatus membrane. Involved in teeth and skeletal development. Has an essential role in the biosynthesis and trafficking of glycosaminoglycans and glycoproteins to produce a proper functioning extracellular matrix. Required for extracellular matrix mineralization. Also involved in the regulation of cellular calcium homeostasis. Does not show transport activity towards bile acids or steroid sulfates. This Xenopus laevis (African clawed frog) protein is Sodium/bile acid cotransporter 7-A (slc10a7-a).